The following is a 287-amino-acid chain: MSKLANRADWADDEEFDDPSALPAQQVTTNKDGTKTVVSYRFNDEGKKVKVTRRIKTTVVREHVNPQVAERRSWAKFGLEKGHAPGPSFDTTSVGENIAFRPSINWKAQAAEAEKNGGEKGSMKDQLKDKKVKCRICSGEHFTARCPFKDTMAPVDEPTAGGAGEDDEAAAGAVGTGSGSYVPPHLRKGAAGGGERMGGKFEKDDLATLRVTNVSELAEEGELRDLFERFGRVTRVFLARDRETQRAKGFAFISFADRSDAARACEKMDGFGYRHLILRVEFAKRTT.

Disordered regions lie at residues 1–34 (MSKLANRADWADDEEFDDPSALPAQQVTTNKDGT) and 159–184 (TAGGAGEDDEAAAGAVGTGSGSYVPP). The RRM domain maps to 207 to 285 (ATLRVTNVSE…LILRVEFAKR (79 aa)).

The protein belongs to the eIF-3 subunit G family. Component of the eukaryotic translation initiation factor 3 (eIF-3) complex.

It is found in the cytoplasm. Functionally, RNA-binding component of the eukaryotic translation initiation factor 3 (eIF-3) complex, which is involved in protein synthesis of a specialized repertoire of mRNAs and, together with other initiation factors, stimulates binding of mRNA and methionyl-tRNAi to the 40S ribosome. The eIF-3 complex specifically targets and initiates translation of a subset of mRNAs involved in cell proliferation. This subunit can bind 18S rRNA. The chain is Eukaryotic translation initiation factor 3 subunit G (tif35) from Aspergillus oryzae (strain ATCC 42149 / RIB 40) (Yellow koji mold).